Consider the following 317-residue polypeptide: E3 ubiquitin-protein ligase NRDP1 (317 aa).

An RING-type; degenerate zinc finger spans residues 18 to 57 (CPICSGVLEEPVQAPHCEHAFCNACITQWFSQQQTCPVDR). A coiled-coil region spans residues 135–175 (IKHLRSVVQQQQIRIGELEKTAAESKHQLSEQKRDIQLLKA).

It carries out the reaction S-ubiquitinyl-[E2 ubiquitin-conjugating enzyme]-L-cysteine + [acceptor protein]-L-lysine = [E2 ubiquitin-conjugating enzyme]-L-cysteine + N(6)-ubiquitinyl-[acceptor protein]-L-lysine.. It functions in the pathway protein modification; protein ubiquitination. Its function is as follows. Acts as E3 ubiquitin-protein ligase and regulates the degradation of target proteins. In Xenopus laevis (African clawed frog), this protein is E3 ubiquitin-protein ligase NRDP1 (rnf41).